The sequence spans 123 residues: Small ribosomal subunit protein uS13 (123 aa).

Residues 93–123 form a disordered region; it reads RRNLPVRGQKTKTNARTRKGPKRAIGGKKKK.

It belongs to the universal ribosomal protein uS13 family. As to quaternary structure, part of the 30S ribosomal subunit. Forms a loose heterodimer with protein S19. Forms two bridges to the 50S subunit in the 70S ribosome.

Located at the top of the head of the 30S subunit, it contacts several helices of the 16S rRNA. In the 70S ribosome it contacts the 23S rRNA (bridge B1a) and protein L5 of the 50S subunit (bridge B1b), connecting the 2 subunits; these bridges are implicated in subunit movement. Contacts the tRNAs in the A and P-sites. The chain is Small ribosomal subunit protein uS13 from Clostridium botulinum (strain Kyoto / Type A2).